The chain runs to 995 residues: Bifunctional glutamine synthetase adenylyltransferase/adenylyl-removing enzyme (995 aa).

Residues 1 to 474 (MNHSAPGNAD…HYEKLFEGDD (474 aa)) are adenylyl removase. GlnE regions lie at residues 122–333 (RRMK…MKRQ) and 637–853 (SYEE…MRRA). The segment at 479–995 (AKLPALDYSA…LEGTSPASAR (517 aa)) is adenylyl transferase.

It belongs to the GlnE family. The cofactor is Mg(2+).

The catalysed reaction is [glutamine synthetase]-O(4)-(5'-adenylyl)-L-tyrosine + phosphate = [glutamine synthetase]-L-tyrosine + ADP. It carries out the reaction [glutamine synthetase]-L-tyrosine + ATP = [glutamine synthetase]-O(4)-(5'-adenylyl)-L-tyrosine + diphosphate. In terms of biological role, involved in the regulation of glutamine synthetase GlnA, a key enzyme in the process to assimilate ammonia. When cellular nitrogen levels are high, the C-terminal adenylyl transferase (AT) inactivates GlnA by covalent transfer of an adenylyl group from ATP to specific tyrosine residue of GlnA, thus reducing its activity. Conversely, when nitrogen levels are low, the N-terminal adenylyl removase (AR) activates GlnA by removing the adenylyl group by phosphorolysis, increasing its activity. The regulatory region of GlnE binds the signal transduction protein PII (GlnB) which indicates the nitrogen status of the cell. This is Bifunctional glutamine synthetase adenylyltransferase/adenylyl-removing enzyme from Bradyrhizobium diazoefficiens (strain JCM 10833 / BCRC 13528 / IAM 13628 / NBRC 14792 / USDA 110).